The primary structure comprises 377 residues: tRNA-specific 2-thiouridylase MnmA (377 aa).

Residues 9 to 16 and leucine 35 contribute to the ATP site; that span reads AMSGGVDS. Catalysis depends on cysteine 105, which acts as the Nucleophile. Cysteine 105 and cysteine 201 are disulfide-bonded. An ATP-binding site is contributed by glycine 129. The interval 151–153 is interaction with tRNA; sequence KNQ. The Cysteine persulfide intermediate role is filled by cysteine 201. Residues 307 to 308 form an interaction with tRNA region; it reads RY.

It belongs to the MnmA/TRMU family.

It localises to the cytoplasm. The enzyme catalyses S-sulfanyl-L-cysteinyl-[protein] + uridine(34) in tRNA + AH2 + ATP = 2-thiouridine(34) in tRNA + L-cysteinyl-[protein] + A + AMP + diphosphate + H(+). Functionally, catalyzes the 2-thiolation of uridine at the wobble position (U34) of tRNA, leading to the formation of s(2)U34. The protein is tRNA-specific 2-thiouridylase MnmA of Leptospira borgpetersenii serovar Hardjo-bovis (strain JB197).